The following is a 445-amino-acid chain: Phosphoglucosamine mutase (445 aa).

Serine 99 functions as the Phosphoserine intermediate in the catalytic mechanism. Positions 99, 242, 244, and 246 each coordinate Mg(2+). The residue at position 99 (serine 99) is a Phosphoserine.

Belongs to the phosphohexose mutase family. The cofactor is Mg(2+). Activated by phosphorylation.

It catalyses the reaction alpha-D-glucosamine 1-phosphate = D-glucosamine 6-phosphate. Functionally, catalyzes the conversion of glucosamine-6-phosphate to glucosamine-1-phosphate. The chain is Phosphoglucosamine mutase from Helicobacter pylori (strain HPAG1).